The primary structure comprises 505 residues: Gap junction alpha-10 protein (505 aa).

The Cytoplasmic portion of the chain corresponds to 1–16; that stretch reads MGDWNLLGGILEEVHS. Residues 17–37 form a helical membrane-spanning segment; sequence HSTIVGKIWLTILFIFRMLVL. Residues 38–76 are Extracellular-facing; the sequence is GVAAEDVWDDEQSAFACNTQQPGCNNICYDDAFPISLIR. Residues 77–97 form a helical membrane-spanning segment; the sequence is FWVLQIIFVSSPSLVYMGHAL. Residues 98–165 are Cytoplasmic-facing; sequence YRLRDFEKQR…TYVLHILTRS (68 aa). Residues 166–186 form a helical membrane-spanning segment; sequence VLEVGFMIGQYILYGFQMHPI. Residues 187–209 lie on the Extracellular side of the membrane; that stretch reads YKCTQAPCPNSVDCFVSRPTEKT. The helical transmembrane segment at 210–230 threads the bilayer; it reads IFMLFMHSIAAISLLLNILEI. The Cytoplasmic segment spans residues 231–505; the sequence is FHLGIRKIMR…IIHETYVYVY (275 aa). A compositionally biased stretch (polar residues) spans 371 to 383; that stretch reads TMTASQHRPSSAL. The segment at 371–491 is disordered; it reads TMTASQHRPS…SKSSHVDSPP (121 aa). The span at 437 to 446 shows a compositional bias: basic and acidic residues; the sequence is MSEKGQRHSD. The segment covering 447–460 has biased composition (low complexity); it reads SGSSRSLNSSCLDF.

Belongs to the connexin family. Alpha-type (group II) subfamily. As to quaternary structure, a connexon is composed of a hexamer of connexins. As to expression, low levels were detected in skin, heart, kidney, testis, ovary, intestine. Expression not detected in brain, sciatic nerve or liver. According to PubMed:15147297 expression is detected only in horizontal cells in the inner nuclear layer of the retina and not in other neurons of the central nervous system or tissues. Detected in the outer plexiform layer of the retina (at protein level).

It is found in the cell membrane. The protein localises to the cell junction. It localises to the gap junction. Its function is as follows. One gap junction consists of a cluster of closely packed pairs of transmembrane channels, the connexons, through which materials of low MW diffuse from one cell to a neighboring cell. Involved in tracer coupling between horizontal cells of the retina. May play a role in the regulation of horizontal cell patterning. This Mus musculus (Mouse) protein is Gap junction alpha-10 protein (Gja10).